The following is an 85-amino-acid chain: Conotoxin Vx15a (85 aa).

Positions 1-23 are cleaved as a signal peptide; the sequence is MEKLTVLILVATVLLTIQVLAQS. Residues 24–49 constitute a propeptide that is removed on maturation; the sequence is DGDKHLMKRSKQYATKRLSALMRGHR. At Gln-50 the chain carries Pyrrolidone carboxylic acid.

The protein belongs to the conotoxin O2 superfamily. Post-translationally, contains 4 disulfide bonds. As to expression, expressed by the venom duct.

The protein resides in the secreted. This Conus vexillum (Flag cone) protein is Conotoxin Vx15a.